We begin with the raw amino-acid sequence, 207 residues long: Large ribosomal subunit protein uL4 (207 aa).

A disordered region spans residues 44–76 (RRQGTQSTKTKSEVRGGGKKPWRQKGTGRARQG). A compositionally biased stretch (basic residues) spans 60 to 71 (GGKKPWRQKGTG).

The protein belongs to the universal ribosomal protein uL4 family. Part of the 50S ribosomal subunit.

Its function is as follows. One of the primary rRNA binding proteins, this protein initially binds near the 5'-end of the 23S rRNA. It is important during the early stages of 50S assembly. It makes multiple contacts with different domains of the 23S rRNA in the assembled 50S subunit and ribosome. Forms part of the polypeptide exit tunnel. This chain is Large ribosomal subunit protein uL4, found in Ruminiclostridium cellulolyticum (strain ATCC 35319 / DSM 5812 / JCM 6584 / H10) (Clostridium cellulolyticum).